Reading from the N-terminus, the 1392-residue chain is DNA-directed RNA polymerase subunit beta (1392 aa).

Belongs to the RNA polymerase beta chain family. In terms of assembly, the RNAP catalytic core consists of 2 alpha, 1 beta, 1 beta' and 1 omega subunit. When a sigma factor is associated with the core the holoenzyme is formed, which can initiate transcription.

It carries out the reaction RNA(n) + a ribonucleoside 5'-triphosphate = RNA(n+1) + diphosphate. DNA-dependent RNA polymerase catalyzes the transcription of DNA into RNA using the four ribonucleoside triphosphates as substrates. The sequence is that of DNA-directed RNA polymerase subunit beta from Neisseria meningitidis serogroup A / serotype 4A (strain DSM 15465 / Z2491).